The primary structure comprises 57 residues: Large ribosomal subunit protein bL32 (57 aa).

Residues 1 to 19 show a composition bias toward basic residues; that stretch reads MATPKRRMSRANTRSRRSQ. The disordered stretch occupies residues 1–21; that stretch reads MATPKRRMSRANTRSRRSQWK.

It belongs to the bacterial ribosomal protein bL32 family.

This Mycobacterium ulcerans (strain Agy99) protein is Large ribosomal subunit protein bL32.